The following is a 139-amino-acid chain: Histone H2B.11 (139 aa).

The segment covering 1–39 (MAPKAEKKPAEKKPVEEKAEKKPKAEKRVPGAKEGGGEK) has biased composition (basic and acidic residues). Positions 1-47 (MAPKAEKKPAEKKPVEEKAEKKPKAEKRVPGAKEGGGEKKGKKKAKK) are disordered. N6-acetyllysine is present on residues lysine 7 and lysine 27. Residue lysine 135 forms a Glycyl lysine isopeptide (Lys-Gly) (interchain with G-Cter in ubiquitin) linkage.

The protein belongs to the histone H2B family. The nucleosome is a histone octamer containing two molecules each of H2A, H2B, H3 and H4 assembled in one H3-H4 heterotetramer and two H2A-H2B heterodimers. The octamer wraps approximately 147 bp of DNA. Post-translationally, can be acetylated to form H2BK6ac and H2BK33ac. In terms of processing, monoubiquitinated by BRE1 to form H2BK143ub1 and deubiquitinated by UBP26. Required for heterochromatic histone H3 di- and trimethylation at H3K4me. May give a specific tag for epigenetic transcriptional activation.

Its subcellular location is the nucleus. The protein localises to the chromosome. Core component of nucleosome. Nucleosomes wrap and compact DNA into chromatin, limiting DNA accessibility to the cellular machineries which require DNA as a template. Histones thereby play a central role in transcription regulation, DNA repair, DNA replication and chromosomal stability. DNA accessibility is regulated via a complex set of post-translational modifications of histones, also called histone code, and nucleosome remodeling. The sequence is that of Histone H2B.11 (H2B.11) from Oryza sativa subsp. indica (Rice).